The following is a 206-amino-acid chain: Mediator of RNA polymerase II transcription subunit 19 (206 aa).

The tract at residues 171–206 (GTGTKTKKRKYKSNGSSMASPNTELQPDDMKRRRLE) is disordered. Positions 183–195 (SNGSSMASPNTEL) are enriched in polar residues.

Belongs to the Mediator complex subunit 19 family. As to quaternary structure, component of the Mediator complex.

Its subcellular location is the nucleus. Its function is as follows. Component of the Mediator complex, a coactivator involved in the regulated transcription of nearly all RNA polymerase II-dependent genes. Mediator functions as a bridge to convey information from gene-specific regulatory proteins to the basal RNA polymerase II transcription machinery. Mediator is recruited to promoters by direct interactions with regulatory proteins and serves as a scaffold for the assembly of a functional preinitiation complex with RNA polymerase II and the general transcription factors. The sequence is that of Mediator of RNA polymerase II transcription subunit 19 (ROX3) from Kluyveromyces lactis (strain ATCC 8585 / CBS 2359 / DSM 70799 / NBRC 1267 / NRRL Y-1140 / WM37) (Yeast).